The following is a 620-amino-acid chain: Arginine--tRNA ligase (620 aa).

Residues 147-157 (ANPTGPIHIGG) carry the 'HIGH' region motif.

This sequence belongs to the class-I aminoacyl-tRNA synthetase family. In terms of assembly, monomer.

Its subcellular location is the cytoplasm. The enzyme catalyses tRNA(Arg) + L-arginine + ATP = L-arginyl-tRNA(Arg) + AMP + diphosphate. The polypeptide is Arginine--tRNA ligase (Bifidobacterium longum subsp. infantis (strain ATCC 15697 / DSM 20088 / JCM 1222 / NCTC 11817 / S12)).